The primary structure comprises 132 residues: Small ribosomal subunit protein uS8 (132 aa).

This sequence belongs to the universal ribosomal protein uS8 family. As to quaternary structure, part of the 30S ribosomal subunit. Contacts proteins S5 and S12.

In terms of biological role, one of the primary rRNA binding proteins, it binds directly to 16S rRNA central domain where it helps coordinate assembly of the platform of the 30S subunit. In Clostridioides difficile (strain 630) (Peptoclostridium difficile), this protein is Small ribosomal subunit protein uS8.